Reading from the N-terminus, the 77-residue chain is MSLEDDVKAIIVDQLGVSPEDVKVDSSFIEDLNADSLDLTELIMTLEEKFAFEISEDDAEQLRTVGDVIKYIQEHQN.

Residues 1 to 76 (MSLEDDVKAI…DVIKYIQEHQ (76 aa)) form the Carrier domain. Ser36 is subject to O-(pantetheine 4'-phosphoryl)serine.

The protein belongs to the acyl carrier protein (ACP) family. Post-translationally, 4'-phosphopantetheine is transferred from CoA to a specific serine of apo-ACP by AcpS. This modification is essential for activity because fatty acids are bound in thioester linkage to the sulfhydryl of the prosthetic group.

The protein resides in the cytoplasm. It participates in lipid metabolism; fatty acid biosynthesis. Functionally, carrier of the growing fatty acid chain in fatty acid biosynthesis. In Chlamydia trachomatis serovar L2 (strain ATCC VR-902B / DSM 19102 / 434/Bu), this protein is Acyl carrier protein.